Reading from the N-terminus, the 645-residue chain is Rab11 family-interacting protein 1 (645 aa).

In terms of domain architecture, C2 spans 1–128 (MSLAASAGRG…DQGRRKKQWY (128 aa)). Over residues 171–187 (PFGKLKDKIKGKNKDSA) the composition is skewed to basic and acidic residues. Residues 171–215 (PFGKLKDKIKGKNKDSASDTASAIVPSVTPSVDSDDESFSKDKKK) are disordered. Phosphoserine occurs at positions 186, 204, 208, and 236. Residues 259 to 296 (WDDDAHEDESSSASDVMSHKRTSSTDQQPNQSNFSLPK) are disordered. Residues 282–293 (STDQQPNQSNFS) are compositionally biased toward polar residues. Phosphoserine occurs at positions 301, 316, 340, 342, 344, 346, 357, 358, and 383. A disordered region spans residues 330 to 545 (PEARSEIRES…PRPHPVKPMN (216 aa)). 2 stretches are compositionally biased toward basic and acidic residues: residues 378-391 (SDRR…KDSM) and 418-432 (AARE…ESKK). Ser-434 carries the phosphoserine modification. The span at 459 to 487 (SEKEKERKGALVEAQLREEDLMRRPEKDA) shows a compositional bias: basic and acidic residues. An FIP-RBD domain is found at 573 to 635 (KKYQPSDPAF…EETPNILRVP (63 aa)). A necessary for interaction with RAB4A and RAB11A, subcellular location and endosomal recycling region spans residues 581–645 (AFAYAQLTHD…AQMGKKAGKM (65 aa)).

Homooligomer. Interacts with RAB11A, RAB11B, RAB25, RAB4A and RAB14.

It localises to the recycling endosome. The protein resides in the cytoplasmic vesicle. Functionally, a Rab11 effector protein involved in the endosomal recycling process. Also involved in controlling membrane trafficking along the phagocytic pathway and in phagocytosis. Interaction with RAB14 may function in the process of neurite formation. This is Rab11 family-interacting protein 1 (Rab11fip1) from Mus musculus (Mouse).